The sequence spans 199 residues: Elongation factor Ts (199 aa).

The involved in Mg(2+) ion dislocation from EF-Tu stretch occupies residues 80 to 83; it reads TDFV.

The protein belongs to the EF-Ts family.

It localises to the cytoplasm. In terms of biological role, associates with the EF-Tu.GDP complex and induces the exchange of GDP to GTP. It remains bound to the aminoacyl-tRNA.EF-Tu.GTP complex up to the GTP hydrolysis stage on the ribosome. The protein is Elongation factor Ts of Thermodesulfovibrio yellowstonii (strain ATCC 51303 / DSM 11347 / YP87).